The chain runs to 273 residues: Karrikin insensitive 2 receptor B (273 aa).

The active-site Nucleophile is the S95. D217 is a catalytic residue.

It belongs to the AB hydrolase superfamily. Expressed in stigma.

Its subcellular location is the nucleus. It is found in the cytoplasm. In terms of biological role, may be involved in plant olfaction during volatile communication. The protein is Karrikin insensitive 2 receptor B of Petunia hybrida (Petunia).